An 89-amino-acid chain; its full sequence is Small ribosomal subunit protein uS19 (89 aa).

Belongs to the universal ribosomal protein uS19 family.

Protein S19 forms a complex with S13 that binds strongly to the 16S ribosomal RNA. The protein is Small ribosomal subunit protein uS19 of Parabacteroides distasonis (strain ATCC 8503 / DSM 20701 / CIP 104284 / JCM 5825 / NCTC 11152).